Here is a 158-residue protein sequence, read N- to C-terminus: SsrA-binding protein (158 aa).

Belongs to the SmpB family.

It localises to the cytoplasm. Required for rescue of stalled ribosomes mediated by trans-translation. Binds to transfer-messenger RNA (tmRNA), required for stable association of tmRNA with ribosomes. tmRNA and SmpB together mimic tRNA shape, replacing the anticodon stem-loop with SmpB. tmRNA is encoded by the ssrA gene; the 2 termini fold to resemble tRNA(Ala) and it encodes a 'tag peptide', a short internal open reading frame. During trans-translation Ala-aminoacylated tmRNA acts like a tRNA, entering the A-site of stalled ribosomes, displacing the stalled mRNA. The ribosome then switches to translate the ORF on the tmRNA; the nascent peptide is terminated with the 'tag peptide' encoded by the tmRNA and targeted for degradation. The ribosome is freed to recommence translation, which seems to be the essential function of trans-translation. This chain is SsrA-binding protein, found in Psychrobacter sp. (strain PRwf-1).